The following is a 514-amino-acid chain: Retron Vc95 probable ATPase (514 aa).

Positions Gly92–Ser99 match the ATP-binding motif.

Its function is as follows. Probable ATPase component of antiviral defense system retron Vc95, composed of a non-coding RNA (ncRNA), a reverse transcriptase (RT), this protein and a putative HNH endonuclease. Expression of retron Vc95 confers protection against bacteriophages T2, T4 and T6. At multiplicity of infection (MOI) of 0.02 cultures slow growth when infected with T4 but do not collapse, at MOI 2 cultures enter growth stasis. This chain is Retron Vc95 probable ATPase, found in Vibrio cholerae serotype O1 biovar El Tor.